Here is a 329-residue protein sequence, read N- to C-terminus: DNA-directed RNA polymerase subunit alpha (329 aa).

The segment at 1–234 (MQSAVNEFLT…QQLAVFVDLE (234 aa)) is alpha N-terminal domain (alpha-NTD). Residues 248–329 (IDPVLLRPVD…WPPASLKNND (82 aa)) form an alpha C-terminal domain (alpha-CTD) region.

This sequence belongs to the RNA polymerase alpha chain family. In terms of assembly, homodimer. The RNAP catalytic core consists of 2 alpha, 1 beta, 1 beta' and 1 omega subunit. When a sigma factor is associated with the core the holoenzyme is formed, which can initiate transcription.

It catalyses the reaction RNA(n) + a ribonucleoside 5'-triphosphate = RNA(n+1) + diphosphate. In terms of biological role, DNA-dependent RNA polymerase catalyzes the transcription of DNA into RNA using the four ribonucleoside triphosphates as substrates. The polypeptide is DNA-directed RNA polymerase subunit alpha (Saccharophagus degradans (strain 2-40 / ATCC 43961 / DSM 17024)).